The chain runs to 382 residues: O-antigen polymerase (382 aa).

Residues 1–3 (MNN) are Cytoplasmic-facing. Residues 4–22 (INKIFITFLCIELIIGGGG) form a helical membrane-spanning segment. At 23-34 (RLLEPLGIFPLR) the chain is on the periplasmic side. The chain crosses the membrane as a helical span at residues 35–54 (YLLFVFSFILLIFNLVTFNF). Residues 55–62 (SITQKCVS) lie on the Cytoplasmic side of the membrane. Residues 63–81 (LFIWLLLFPFYGFFVGLLA) form a helical membrane-spanning segment. Residues 82–94 (GNKINDILFDVQP) lie on the Periplasmic side of the membrane. The helical transmembrane segment at 95-112 (YLFMLSLIYLFTLRYTLK) threads the bilayer. Residues 113–125 (VFSCEIFIKIVNA) are Cytoplasmic-facing. A helical membrane pass occupies residues 126–146 (FALYGSLLYISYIILLNFGLL). At 147-167 (NFNLIYEHLSLTSEFFFRPDG) the chain is on the periplasmic side. A helical transmembrane segment spans residues 168–187 (AFFSKSFYFFGVGAIISFVD). The Cytoplasmic segment spans residues 188-189 (KK). A helical membrane pass occupies residues 190–206 (YLKCLIIVLAILLTESR). Topologically, residues 207-208 (GV) are periplasmic. The chain crosses the membrane as a helical span at residues 209-226 (LLFTTLSLLLASFKLHKL). Residues 227-229 (YLN) lie on the Cytoplasmic side of the membrane. A helical transmembrane segment spans residues 230-247 (TIIIILGSVLFIIMLYMV). Residues 248-300 (GSRSEDSDSVRFNDLYFYYKNVDLATFLFGRGFGSFILDRLRIEIVPLEILQK) lie on the Periplasmic side of the membrane. Residues 301–318 (TGVIGVFISLVPMLLIFL) traverse the membrane as a helical segment. The Cytoplasmic portion of the chain corresponds to 319-329 (KGYFLNSTKTS). Residues 330-349 (LMMSLILFFSITVSITNPFL) form a helical membrane-spanning segment. Over 350–352 (FTP) the chain is Periplasmic. A helical transmembrane segment spans residues 353–370 (MGIFIIGVVVLWVFSIEN). Topologically, residues 371-382 (IQISNNLTSGAK) are cytoplasmic.

The protein localises to the cell inner membrane. It catalyses the reaction n lipid-linked O-antigen repeat units = a lipid-linked O antigen + (n-1) polyisoprenyl diphosphate.. It participates in bacterial outer membrane biogenesis; LPS O-antigen biosynthesis. Functionally, polymerase involved in the biosynthesis of the lipopolysaccharide (LPS). Catalyzes the polymerization of the O-antigen repeat units on the periplasmic face of the inner membrane, leading to the formation of the lipid-linked O-antigen molecule. This Shigella flexneri protein is O-antigen polymerase.